A 706-amino-acid chain; its full sequence is Ribosomal RNA large subunit methyltransferase K/L (706 aa).

The 112-residue stretch at 43–154 (LMYQSLLWSR…RDMASVALDL (112 aa)) folds into the THUMP domain.

This sequence belongs to the methyltransferase superfamily. RlmKL family.

The protein resides in the cytoplasm. It carries out the reaction guanosine(2445) in 23S rRNA + S-adenosyl-L-methionine = N(2)-methylguanosine(2445) in 23S rRNA + S-adenosyl-L-homocysteine + H(+). It catalyses the reaction guanosine(2069) in 23S rRNA + S-adenosyl-L-methionine = N(2)-methylguanosine(2069) in 23S rRNA + S-adenosyl-L-homocysteine + H(+). Functionally, specifically methylates the guanine in position 2445 (m2G2445) and the guanine in position 2069 (m7G2069) of 23S rRNA. In Yersinia pestis bv. Antiqua (strain Antiqua), this protein is Ribosomal RNA large subunit methyltransferase K/L.